Reading from the N-terminus, the 576-residue chain is Urease subunit alpha (576 aa).

The Urease domain occupies 132 to 576; that stretch reads GGVDTHIHFI…LPMAQRYFLF (445 aa). The Ni(2+) site is built by H137, H139, and K220. Residue K220 is modified to N6-carboxylysine. H222 contributes to the substrate binding site. 2 residues coordinate Ni(2+): H249 and H275. The active-site Proton donor is the H323. A Ni(2+)-binding site is contributed by D363.

This sequence belongs to the metallo-dependent hydrolases superfamily. Urease alpha subunit family. As to quaternary structure, heterotrimer of UreA (gamma), UreB (beta) and UreC (alpha) subunits. Three heterotrimers associate to form the active enzyme. It depends on Ni cation as a cofactor. Carboxylation allows a single lysine to coordinate two nickel ions.

The protein resides in the cytoplasm. The enzyme catalyses urea + 2 H2O + H(+) = hydrogencarbonate + 2 NH4(+). Its pathway is nitrogen metabolism; urea degradation; CO(2) and NH(3) from urea (urease route): step 1/1. In Arthrobacter sp. (strain FB24), this protein is Urease subunit alpha.